We begin with the raw amino-acid sequence, 399 residues long: MKPPRRWMYGRGGGKGKPAGLLLLGVFLCLSVVLLLLLHGSSPSLEGEGRKPEAVEAAGGGGEEEEVAVARAEVEEAPLPPGNARLAFLFIARNRLPLDLVWDAFFRGDKEGRFSIFVHSRPGFVLTRATTRSGFFYNRQVNNSVQVDWGEASMIEAERVLLAHALKDPLNERFVFVSDSCVPLYNFNYTYDYIMSSSTSFVDSFADTKAGRYNPRMDPIIPVENWRKGSQWAVLTRKHAEVVVEDEEVLPEFQKHCRRRPLPEFWRDWDRPIPAEAWKAHNCIPDEHYVQTLLAQHGLEEELTRRSVTHSAWDLSSSKDRERRGWHPVTYKISDATPALVKSIKDIDNIYYETENRKEWCTSNGKPAPCFLFARKFTRAAGLKLLDLSLIAANGASTM.

Topologically, residues 1–17 (MKPPRRWMYGRGGGKGK) are cytoplasmic. A helical; Signal-anchor for type II membrane protein membrane pass occupies residues 18-38 (PAGLLLLGVFLCLSVVLLLLL). Topologically, residues 39 to 399 (HGSSPSLEGE…LIAANGASTM (361 aa)) are lumenal. N-linked (GlcNAc...) asparagine glycosylation is found at Asn142 and Asn188.

It belongs to the glycosyltransferase 14 family. Expressed in roots, culms, leaves and panicles. Expressed in vascular bundles of leaf sheaths and stems where sclerenchyma cells are developing. Expressed in mechanical tissues of young organs, such as young leaf sheaths, stems and tiller buds.

The protein localises to the membrane. Glycosyltransferase required for the regulation of cellulose biosynthesis in the cell wall. Required for the biosynthesis of hexoses (glucose, mannose and galactose) in both cellulosic and non-cellulosic (pectins and hemicelluloses) components of cell walls. Required for the formation of arabinogalactan proteins which contribute to the strengthening of cell walls. Possesses low glycosyltransferase activity. This Oryza sativa subsp. japonica (Rice) protein is Glycosyltransferase BC10.